The following is a 304-amino-acid chain: HTH-type transcriptional activator CmpR (304 aa).

The region spanning 1-61 (MKNATLHQFE…EQIGRKIYLT (61 aa)) is the HTH lysR-type domain. The segment at residues 21–40 (FTKAAEELFLTQPTVSQQMK) is a DNA-binding region (H-T-H motif).

Belongs to the LysR transcriptional regulatory family.

It is found in the cytoplasm. Its function is as follows. Activates transcription of the cmpABCD operon under carbon dioxide-limited conditions. Specifically binds to the cmpR-cmpA intergenic region. The polypeptide is HTH-type transcriptional activator CmpR (cmpR) (Synechocystis sp. (strain ATCC 27184 / PCC 6803 / Kazusa)).